The primary structure comprises 418 residues: IQ domain-containing protein C (418 aa).

Residues 6 to 35 form the IQ domain; that stretch reads FLRKVSTLQAGFRGFLVRRQFQSLRAEYEA. 5 disordered regions span residues 101–142, 230–264, 280–299, 327–355, and 376–418; these read QKKT…SVSK, HHAE…KGRE, SQAG…QPFK, AETQ…AGPC, and GSLD…LQWR. Polar residues-rich tracts occupy residues 129 to 142 and 249 to 259; these read KASQ…SVSK and SVTSAGKTTAG. Positions 141 to 176 form a coiled coil; it reads SKMENADLGLSQSQQELQEQRNHLAMELLWLQQAIN. Residues 390 to 404 are compositionally biased toward polar residues; that stretch reads PPSAGSSGHGNTSEL.

In Mus musculus (Mouse), this protein is IQ domain-containing protein C (Iqcc).